A 419-amino-acid polypeptide reads, in one-letter code: Cyclin-B2-2 (419 aa).

The tract at residues 79–116 (QPSSAPLAPIGSERQKRTADSAFHGPADMECTKITSDD) is disordered.

The protein belongs to the cyclin family. Cyclin AB subfamily. As to quaternary structure, interacts with CDKB2-1. In terms of tissue distribution, expressed in the intercalary meristem and the elongation zone of internodes. Expressed in adventitious roots at all nodes under submergence conditions.

It localises to the nucleus. Involved in the control of the cell cycle at the G2/M (mitosis) transition. May associate to CDKB2-1 and activate CDKB2-1 kinase to promote cell division. The protein is Cyclin-B2-2 (CYCB2-2) of Oryza sativa subsp. indica (Rice).